We begin with the raw amino-acid sequence, 139 residues long: D-ribose pyranase (139 aa).

Histidine 20 functions as the Proton donor in the catalytic mechanism. Substrate is bound by residues aspartate 28, histidine 106, and 128-130 (YAN).

Belongs to the RbsD / FucU family. RbsD subfamily. In terms of assembly, homodecamer.

It localises to the cytoplasm. It carries out the reaction beta-D-ribopyranose = beta-D-ribofuranose. It functions in the pathway carbohydrate metabolism; D-ribose degradation; D-ribose 5-phosphate from beta-D-ribopyranose: step 1/2. Functionally, catalyzes the interconversion of beta-pyran and beta-furan forms of D-ribose. This Escherichia coli O139:H28 (strain E24377A / ETEC) protein is D-ribose pyranase.